The chain runs to 1571 residues: Paternally-expressed gene 3 protein (1571 aa).

Disordered regions lie at residues 1–120 and 137–241; these read MYHH…NPIQ and AEDD…QERG. Composition is skewed to basic and acidic residues over residues 35–56, 80–99, 169–186, 193–215, and 223–241; these read GSERDLERRGRSRDVEPRDRWP, FGLDRDDDRRSMDYESRSQD, PEAKKPSHRRGICEDESS, KFIKDVARNPKSGRARELNERPP, and DNWKDSSSSRRESVIQERG. Positions 199–265 are 10 X 5 AA repeat of P-H-X-X-E; the sequence is ARNPKSGRAR…DLASRSRALE (67 aa). Residues 199–265 form a 3 X 5 AA repeat of P-H-D-D-K region; that stretch reads ARNPKSGRAR…DLASRSRALE (67 aa). 4 consecutive C2H2-type zinc fingers follow at residues 325-347, 378-400, 436-458, and 520-542; these read YVCDECGRQFSVISEFVEHQIMH, FECKECGETFSRSAALAEHRQIH, YECKVCKETFLHSSALIEHQKIH, and YECKVCGESFLHLSSLREHQKIH. Positions 456-495 are disordered; sequence KIHGRGNSDDRDNERERERDRLRARAREQRERERERERER. Disordered stretches follow at residues 585–649, 672–713, and 764–820; these read ALMG…LKFP, EAQK…TYEG, and REDA…AKKK. A compositionally biased stretch (basic and acidic residues) spans 592 to 614; sequence SSEHQKNRSRRNFFEGRGFEKPF. Composition is skewed to polar residues over residues 770 to 781 and 799 to 808; these read GSSSSNYHTPNV and DVTFSVPSSS. Basic and acidic residues predominate over residues 809 to 820; sequence VREHQKARAKKK. The segment at 850–872 adopts a C2H2-type 5 zinc-finger fold; it reads FECQECGEAFARRSELIEHQKIH. The tract at residues 937–1070 is disordered; the sequence is FNAEEPHDKE…ESHGQEKVED (134 aa). Residues 940 to 1070 are compositionally biased toward basic and acidic residues; it reads EEPHDKETHG…ESHGQEKVED (131 aa). A run of 13 repeats spans residues 942 to 946, 967 to 971, 987 to 991, 992 to 996, 997 to 1001, 1002 to 1006, 1007 to 1011, 1012 to 1016, 1017 to 1021, 1022 to 1026, 1027 to 1031, 1032 to 1036, and 1047 to 1051. 4 C2H2-type zinc fingers span residues 1091 to 1113, 1147 to 1169, 1209 to 1231, and 1266 to 1289; these read YECQDCGLGFTDLNDLTSHQDTH, YECPKCGESFIHSSLLFEHQRVH, IRCRQCGQGFIHSSALNEHMRQH, and FECTICGECFFTAKQLGDHHTKVH. A C2H2-type 10; degenerate zinc finger spans residues 1317-1339; sequence YECKDCGQSFLDDTVIAERMVFH. The segment at 1373–1487 is disordered; the sequence is NAEAAEPEVE…DQEIEVEEPY (115 aa). Acidic residues-rich tracts occupy residues 1377-1397, 1405-1418, and 1431-1485; these read AEPEVEAAEPEVEAAEPEVEA, EGPDGEAAEPDGEA, and DADE…EVEE. C2H2-type zinc fingers lie at residues 1488–1510 and 1547–1569; these read YNCHECAETFASSSAFGEHLKSH and FKCDVCGQLFNDRLSLARHQNSH.

Belongs to the krueppel C2H2-type zinc-finger protein family. Homodimer. Interacts with SIAH1A and SIAH2. Interacts with TRAF2. In terms of tissue distribution, brain, glial cells, neurons, skeletal muscle, uterus and placenta. In the placenta it is found in all trophoblast cells.

The protein localises to the nucleus. The protein resides in the cytoplasm. Functionally, induces apoptosis in cooperation with SIAH1A. Acts as a mediator between p53/TP53 and BAX in a neuronal death pathway that is activated by DNA damage. Acts synergistically with TRAF2 and inhibits TNF induced apoptosis through activation of NF-kappa-B. Plays a role in regulating maternal behavior and offspring growth. The sequence is that of Paternally-expressed gene 3 protein (Peg3) from Mus musculus (Mouse).